Here is a 478-residue protein sequence, read N- to C-terminus: Tubulin gamma chain (478 aa).

141 to 147 (AGGTGSG) contacts GTP. Positions 451-478 (ISQKESSSLANENGNGANNKPGKSAMAL) are disordered. Positions 459–468 (LANENGNGAN) are enriched in polar residues.

The protein belongs to the tubulin family.

The protein resides in the cytoplasm. Its subcellular location is the cytoskeleton. It localises to the microtubule organizing center. The protein localises to the centrosome. Functionally, tubulin is the major constituent of microtubules. The gamma chain is found at microtubule organizing centers (MTOC) such as the spindle poles or the centrosome, suggesting that it is involved in the minus-end nucleation of microtubule assembly. The polypeptide is Tubulin gamma chain (Reticulomyxa filosa).